Consider the following 145-residue polypeptide: Endoribonuclease YbeY (145 aa).

Zn(2+) contacts are provided by His109, His113, and His119.

Belongs to the endoribonuclease YbeY family. Requires Zn(2+) as cofactor.

Its subcellular location is the cytoplasm. In terms of biological role, single strand-specific metallo-endoribonuclease involved in late-stage 70S ribosome quality control and in maturation of the 3' terminus of the 16S rRNA. This Vesicomyosocius okutanii subsp. Calyptogena okutanii (strain HA) protein is Endoribonuclease YbeY.